The chain runs to 227 residues: Translation initiation factor 6 (227 aa).

Belongs to the eIF-6 family.

Functionally, binds to the 50S ribosomal subunit and prevents its association with the 30S ribosomal subunit to form the 70S initiation complex. In Pyrococcus abyssi (strain GE5 / Orsay), this protein is Translation initiation factor 6.